The sequence spans 239 residues: Large ribosomal subunit protein uL2 (239 aa).

The segment at 200–239 (VNHPHGGKEHHIGRPSTVSRRAPPGRKVGHIAARRTGRRK) is disordered. Residues 222–239 (PPGRKVGHIAARRTGRRK) show a composition bias toward basic residues.

The protein belongs to the universal ribosomal protein uL2 family. As to quaternary structure, part of the 50S ribosomal subunit. Forms a bridge to the 30S subunit in the 70S ribosome.

One of the primary rRNA binding proteins. Required for association of the 30S and 50S subunits to form the 70S ribosome, for tRNA binding and peptide bond formation. It has been suggested to have peptidyltransferase activity; this is somewhat controversial. Makes several contacts with the 16S rRNA in the 70S ribosome. The sequence is that of Large ribosomal subunit protein uL2 from Thermococcus gammatolerans (strain DSM 15229 / JCM 11827 / EJ3).